The primary structure comprises 300 residues: Diaminopimelate epimerase (300 aa).

Substrate contacts are provided by Asn-15, Gln-47, and Asn-67. The Proton donor role is filled by Cys-76. Residues 77-78, Asn-163, Asn-197, and 215-216 each bind substrate; these read GN and ER. Cys-224 serves as the catalytic Proton acceptor. A substrate-binding site is contributed by 225-226; it reads GS. Residues 275–300 are disordered; the sequence is SGTFDPATGEWSRDAQNDKPTDRGAA. A compositionally biased stretch (basic and acidic residues) spans 285–300; it reads WSRDAQNDKPTDRGAA.

It belongs to the diaminopimelate epimerase family. Homodimer.

It is found in the cytoplasm. The catalysed reaction is (2S,6S)-2,6-diaminopimelate = meso-2,6-diaminopimelate. It functions in the pathway amino-acid biosynthesis; L-lysine biosynthesis via DAP pathway; DL-2,6-diaminopimelate from LL-2,6-diaminopimelate: step 1/1. Its function is as follows. Catalyzes the stereoinversion of LL-2,6-diaminopimelate (L,L-DAP) to meso-diaminopimelate (meso-DAP), a precursor of L-lysine and an essential component of the bacterial peptidoglycan. The chain is Diaminopimelate epimerase from Brucella anthropi (strain ATCC 49188 / DSM 6882 / CCUG 24695 / JCM 21032 / LMG 3331 / NBRC 15819 / NCTC 12168 / Alc 37) (Ochrobactrum anthropi).